Consider the following 117-residue polypeptide: Ribosome-binding factor A (117 aa).

It belongs to the RbfA family. As to quaternary structure, monomer. Binds 30S ribosomal subunits, but not 50S ribosomal subunits or 70S ribosomes.

The protein resides in the cytoplasm. Functionally, one of several proteins that assist in the late maturation steps of the functional core of the 30S ribosomal subunit. Associates with free 30S ribosomal subunits (but not with 30S subunits that are part of 70S ribosomes or polysomes). Required for efficient processing of 16S rRNA. May interact with the 5'-terminal helix region of 16S rRNA. In Leuconostoc mesenteroides subsp. mesenteroides (strain ATCC 8293 / DSM 20343 / BCRC 11652 / CCM 1803 / JCM 6124 / NCDO 523 / NBRC 100496 / NCIMB 8023 / NCTC 12954 / NRRL B-1118 / 37Y), this protein is Ribosome-binding factor A.